A 207-amino-acid polypeptide reads, in one-letter code: Large ribosomal subunit protein uL4 (207 aa).

The interval 48–89 (SHKVKNRSEVRGGGRKPWRQKGTGRARQGSIRSPQWRGGGVV) is disordered. Positions 60-71 (GGRKPWRQKGTG) are enriched in basic residues.

The protein belongs to the universal ribosomal protein uL4 family. In terms of assembly, part of the 50S ribosomal subunit.

Functionally, one of the primary rRNA binding proteins, this protein initially binds near the 5'-end of the 23S rRNA. It is important during the early stages of 50S assembly. It makes multiple contacts with different domains of the 23S rRNA in the assembled 50S subunit and ribosome. In terms of biological role, forms part of the polypeptide exit tunnel. The protein is Large ribosomal subunit protein uL4 of Bacillus velezensis (strain DSM 23117 / BGSC 10A6 / LMG 26770 / FZB42) (Bacillus amyloliquefaciens subsp. plantarum).